A 1031-amino-acid chain; its full sequence is Exportin-T (1031 aa).

This sequence belongs to the exportin family.

The protein localises to the nucleus. The protein resides in the cytoplasm. TRNA nucleus export receptor which facilitates tRNA translocation across the nuclear pore complex. Involved in pre-tRNA splicing, probably by affecting the interaction of pre-tRNA with splicing endonuclease. In Emericella nidulans (strain FGSC A4 / ATCC 38163 / CBS 112.46 / NRRL 194 / M139) (Aspergillus nidulans), this protein is Exportin-T (los1).